A 652-amino-acid chain; its full sequence is tRNA 5-methylaminomethyl-2-thiouridine biosynthesis bifunctional protein MnmC (652 aa).

Positions 1–227 (MLSWKNDLTP…KREMLTGKYS (227 aa)) are tRNA (mnm(5)s(2)U34)-methyltransferase. The interval 259 to 652 (IGAGIAGSTL…ARFLYRRIRK (394 aa)) is FAD-dependent cmnm(5)s(2)U34 oxidoreductase.

It in the N-terminal section; belongs to the methyltransferase superfamily. tRNA (mnm(5)s(2)U34)-methyltransferase family. In the C-terminal section; belongs to the DAO family. It depends on FAD as a cofactor.

It is found in the cytoplasm. It catalyses the reaction 5-aminomethyl-2-thiouridine(34) in tRNA + S-adenosyl-L-methionine = 5-methylaminomethyl-2-thiouridine(34) in tRNA + S-adenosyl-L-homocysteine + H(+). In terms of biological role, catalyzes the last two steps in the biosynthesis of 5-methylaminomethyl-2-thiouridine (mnm(5)s(2)U) at the wobble position (U34) in tRNA. Catalyzes the FAD-dependent demodification of cmnm(5)s(2)U34 to nm(5)s(2)U34, followed by the transfer of a methyl group from S-adenosyl-L-methionine to nm(5)s(2)U34, to form mnm(5)s(2)U34. The chain is tRNA 5-methylaminomethyl-2-thiouridine biosynthesis bifunctional protein MnmC from Leptospira borgpetersenii serovar Hardjo-bovis (strain JB197).